We begin with the raw amino-acid sequence, 134 residues long: MNTLRLNIVTPNGSVYEREDVEMAVLQTTAGEMGIMYGHIPTVAALKTGHVKVNFHNGNEFIAVSDGFIEARQHQLSIIVQTAEPASEIDVERAKLAKSRAESHLEDDDDNTDINRAKRALERANNRLRVAELQ.

Over residues 94–104 (AKLAKSRAESH) the composition is skewed to basic and acidic residues. A disordered region spans residues 94-115 (AKLAKSRAESHLEDDDDNTDIN).

Belongs to the ATPase epsilon chain family. F-type ATPases have 2 components, CF(1) - the catalytic core - and CF(0) - the membrane proton channel. CF(1) has five subunits: alpha(3), beta(3), gamma(1), delta(1), epsilon(1). CF(0) has three main subunits: a, b and c.

It is found in the cell membrane. Functionally, produces ATP from ADP in the presence of a proton gradient across the membrane. The sequence is that of ATP synthase epsilon chain from Staphylococcus epidermidis (strain ATCC 12228 / FDA PCI 1200).